The sequence spans 171 residues: MTKQHAFTREDLLRCSRGELFGPGNAQLPAPNMLMVDRIVHISEVGGKYGKGELVAELDINPDLWFFACHFEGDPVMPGCLGLDAMWQLVGFYLGWQGNPGRGRALGSGEVKFFGQVLPTAKKVTYNIHIKRTINRSLILGIADGTVSVDGREIYSAESLRVGLFTSTDSF.

Residue His70 is part of the active site.

The protein belongs to the thioester dehydratase family. FabA subfamily. Homodimer.

Its subcellular location is the cytoplasm. The catalysed reaction is a (3R)-hydroxyacyl-[ACP] = a (2E)-enoyl-[ACP] + H2O. The enzyme catalyses (3R)-hydroxydecanoyl-[ACP] = (2E)-decenoyl-[ACP] + H2O. It carries out the reaction (2E)-decenoyl-[ACP] = (3Z)-decenoyl-[ACP]. The protein operates within lipid metabolism; fatty acid biosynthesis. Necessary for the introduction of cis unsaturation into fatty acids. Catalyzes the dehydration of (3R)-3-hydroxydecanoyl-ACP to E-(2)-decenoyl-ACP and then its isomerization to Z-(3)-decenoyl-ACP. Can catalyze the dehydratase reaction for beta-hydroxyacyl-ACPs with saturated chain lengths up to 16:0, being most active on intermediate chain length. The chain is 3-hydroxydecanoyl-[acyl-carrier-protein] dehydratase from Stutzerimonas stutzeri (strain A1501) (Pseudomonas stutzeri).